Reading from the N-terminus, the 268-residue chain is Ribosomal RNA small subunit methyltransferase A (268 aa).

6 residues coordinate S-adenosyl-L-methionine: N10, I12, G37, E58, D83, and N107.

Belongs to the class I-like SAM-binding methyltransferase superfamily. rRNA adenine N(6)-methyltransferase family. RsmA subfamily.

The protein localises to the cytoplasm. The catalysed reaction is adenosine(1518)/adenosine(1519) in 16S rRNA + 4 S-adenosyl-L-methionine = N(6)-dimethyladenosine(1518)/N(6)-dimethyladenosine(1519) in 16S rRNA + 4 S-adenosyl-L-homocysteine + 4 H(+). In terms of biological role, specifically dimethylates two adjacent adenosines (A1518 and A1519) in the loop of a conserved hairpin near the 3'-end of 16S rRNA in the 30S particle. May play a critical role in biogenesis of 30S subunits. This Caldanaerobacter subterraneus subsp. tengcongensis (strain DSM 15242 / JCM 11007 / NBRC 100824 / MB4) (Thermoanaerobacter tengcongensis) protein is Ribosomal RNA small subunit methyltransferase A.